We begin with the raw amino-acid sequence, 362 residues long: Cobalt-precorrin-5B C(1)-methyltransferase (362 aa).

The protein belongs to the CbiD family.

The catalysed reaction is Co-precorrin-5B + S-adenosyl-L-methionine = Co-precorrin-6A + S-adenosyl-L-homocysteine. It functions in the pathway cofactor biosynthesis; adenosylcobalamin biosynthesis; cob(II)yrinate a,c-diamide from sirohydrochlorin (anaerobic route): step 6/10. Catalyzes the methylation of C-1 in cobalt-precorrin-5B to form cobalt-precorrin-6A. This chain is Cobalt-precorrin-5B C(1)-methyltransferase, found in Burkholderia orbicola (strain MC0-3).